Reading from the N-terminus, the 541-residue chain is Glutamyl-tRNA(Gln) amidotransferase subunit A, chloroplastic/mitochondrial (541 aa).

Active-site charge relay system residues include Lys121 and Ser196. Catalysis depends on Ser220, which acts as the Acyl-ester intermediate.

This sequence belongs to the amidase family. GatA subfamily. In terms of assembly, subunit of the heterotrimeric GatCAB amidotransferase (AdT) complex, composed of A, B and C subunits.

Its subcellular location is the mitochondrion. The protein resides in the plastid. The protein localises to the chloroplast stroma. The enzyme catalyses L-glutamyl-tRNA(Gln) + L-glutamine + ATP + H2O = L-glutaminyl-tRNA(Gln) + L-glutamate + ADP + phosphate + H(+). Allows the formation of correctly charged Gln-tRNA(Gln) through the transamidation of misacylated Glu-tRNA(Gln) in chloroplasts and mitochondria. The reaction takes place in the presence of glutamine and ATP through an activated gamma-phospho-Glu-tRNA(Gln). The chain is Glutamyl-tRNA(Gln) amidotransferase subunit A, chloroplastic/mitochondrial from Sorghum bicolor (Sorghum).